The primary structure comprises 1820 residues: MARKFSSARPEMFRRFTPDSLEEIEAFTELKKSCTLEKKEPESTPRIDLEAGKPLPMIYGDPPEDLLNIPLEDLDPFYKTQKTFIVISKGNIINRFNAERALYIFSPFNPIRRGAIRVFVNSAFNFFIMFTIFSNCIFMTISNPPAWSKIVEYTFTGIYTFEVIVKVLSRGFCIGHFTFLRDPWNWLDFSVVTMTYITEFIDLRNVSALRTFRVLRALKTITIFPGLKTIVRALIESMKQMGDVVILTVFSLAVFTLAGMQLFMGNLRHKCIRWPISNVTLDYESAYNTTFDFTAYIENEENQYFLDGALDALLCGNNSDAGKCPEGYTCMKAGRNPNYGYTNYDNFAWTFLCLFRLMLQDYWENLYQMTLRAAGKSYMVFFIMVIFLGSFYLINLILAVVAMAYEEQNQATLAEAQEKEAEFQRAVEQLRIQQEQINDERKASLASQLTQNQEAEITDDGDDAIKECNGKAFPLANIREPSSVKLSTEEQRSDSKSMDSKHSVDKPSLKHKAASTMSVFTLEDLEAARRPCPPVWYKFAGFVFKWNCCGPWVFLKKWVHFVMMDPFTDLFITLCIILNTLFMSIEHHPMNESFQSLLSAGNLVFTTIFAAEMVLKIIALDPYYYFQQTWNIFDSIIVSLSLLELGLSNMQGMSVLRSLRLLRIFKLAKSWPTLNILIKIICNSVGALGNLTIVLAIIVFIFALVGFQLFGKNYKEYVCKISDDCELPRWHMNDFFHSFLIVFRALCGEWIETMWDCMEVGGVPMCLAVYMMVIIIGNLVMLNLFLALLLSSFSSDNLSSIEEDDEVNSLQVASERISRAKNWVKIFITGTVQALVLWIQGKKPPSDDVVGEEGDNEGKKDTLPLNYLDGEKIVDGITNCVESPTLNLPIVKGESEIEEEGLVDSSDEEDTNKKKHALNDEDSSVCSTVDYSPSEQDPLAKEEEEEEEEEPEELESKDPEACFTEKCIWRFPFLDVDITQGKGKIWWNLRRTCYTIVEHDYFETFIIFMILLSSGVLAFEDIYIWRRRVIKVILEYADKVFTYVFIVEMLLKWVAYGFKRYFTDAWCWLDFVIVGASIMGITSSLLGYEELGAIKNLRTIRALRPLRALSRFEGMKVVVRALLGAIPSIMNVLLVCLMFWLIFSIMGVNLFAGKFYRCINTTTDEILPVEEVNNRSDCMALMYTNEVRWVNLKVNYDNAGMGYLSLLQVSTFKGWMDIMYAAVDSREVEDQPIYEINVYMYLYFVIFIVFGAFFTLNLFIGVIIDNFNRQKQKLGGEDLFMTEEQKKYYNAMKKLGSKKAAKCIPRPSNVVQGVVYDIVTQPFTDIFIMALICINMVAMMVESEDQSQVKKDILSQINVIFVIIFTVECLLKLLALRQYFFTVGWNVFDFAVVVISIIGLLLSDIIEKYFVSPTLFRVIRLARIARVLRLIRAAKGIRTLLFALMMSLPALFNIGLLLFLIMFIFSIFGMSNFAYVKKQGGVDDIFNFETFGNSMICLFEITTSAGWDGLLLPTLNTGPPDCDPDVENPGTDVRGNCGNPGKGITFFCSYIILSFLVVVNMYIAIILENFGVAQEESSDLLCEDDFVMFDETWHKFDVHGTQFLDYNDLPRFVNALQEPMRIPNPNRHKLAKMDMYVVMEDKISYLDVLLAVTQEVLGDTTEMEAMRLSIQAKFKKDNPSPTFFEPVVTTLRRKEEEWASVVIQRAFRQYLLMRAVSHASFLSQIKHMNEGPKDGVGSQDSLITQKMNALYRGNPELTMPLEQQIKPMLDKPRMPSLSVPETYPIQIPKEVTNEVILHSAPMVRQNYSYSGAIVVRESIV.

Residues 1–117 (MARKFSSARP…FNPIRRGAIR (117 aa)) lie on the Cytoplasmic side of the membrane. The stretch at 108 to 410 (FNPIRRGAIR…VAMAYEEQNQ (303 aa)) is one I repeat. Residues 118 to 138 (VFVNSAFNFFIMFTIFSNCIF) form a helical membrane-spanning segment. The Extracellular portion of the chain corresponds to 139–149 (MTISNPPAWSK). The chain crosses the membrane as a helical span at residues 150 to 171 (IVEYTFTGIYTFEVIVKVLSRG). The Cytoplasmic portion of the chain corresponds to 172–176 (FCIGH). Residues 177–197 (FTFLRDPWNWLDFSVVTMTYI) form a helical membrane-spanning segment. At 198–203 (TEFIDL) the chain is on the extracellular side. A helical; Voltage-sensor transmembrane segment spans residues 204 to 224 (RNVSALRTFRVLRALKTITIF). Residues 225-243 (PGLKTIVRALIESMKQMGD) are Cytoplasmic-facing. A helical transmembrane segment spans residues 244 to 264 (VVILTVFSLAVFTLAGMQLFM). Residues 265–346 (GNLRHKCIRW…PNYGYTNYDN (82 aa)) lie on the Extracellular side of the membrane. Cysteine 271 and cysteine 324 form a disulfide bridge. N-linked (GlcNAc...) asparagine glycans are attached at residues asparagine 278, asparagine 288, and asparagine 317. A non-homologous region of repeat I region spans residues 285 to 342 (SAYNTTFDFTAYIENEENQYFLDGALDALLCGNNSDAGKCPEGYTCMKAGRNPNYGYT). Positions 347–371 (FAWTFLCLFRLMLQDYWENLYQMTL) form an intramembrane region, pore-forming. Residues 372–378 (RAAGKSY) are Extracellular-facing. A helical membrane pass occupies residues 379-402 (MVFFIMVIFLGSFYLINLILAVVA). Over 403–557 (MAYEEQNQAT…CCGPWVFLKK (155 aa)) the chain is Cytoplasmic. Positions 483–507 (SVKLSTEEQRSDSKSMDSKHSVDKP) are disordered. The segment covering 487-507 (STEEQRSDSKSMDSKHSVDKP) has biased composition (basic and acidic residues). The II repeat unit spans residues 548 to 811 (CCGPWVFLKK…EEDDEVNSLQ (264 aa)). A helical transmembrane segment spans residues 558–578 (WVHFVMMDPFTDLFITLCIIL). Topologically, residues 579 to 599 (NTLFMSIEHHPMNESFQSLLS) are extracellular. Asparagine 591 carries N-linked (GlcNAc...) asparagine glycosylation. A helical membrane pass occupies residues 600–620 (AGNLVFTTIFAAEMVLKIIAL). The Cytoplasmic portion of the chain corresponds to 621 to 625 (DPYYY). Residues 626-643 (FQQTWNIFDSIIVSLSLL) traverse the membrane as a helical segment. Residues 644–650 (ELGLSNM) lie on the Extracellular side of the membrane. Residues 651–671 (QGMSVLRSLRLLRIFKLAKSW) traverse the membrane as a helical; Voltage-sensor segment. The Cytoplasmic segment spans residues 672–690 (PTLNILIKIICNSVGALGN). The helical transmembrane segment at 691–711 (LTIVLAIIVFIFALVGFQLFG) threads the bilayer. Over 712 to 734 (KNYKEYVCKISDDCELPRWHMND) the chain is Extracellular. The segment at residues 735 to 755 (FFHSFLIVFRALCGEWIETMW) is an intramembrane region (pore-forming). Residues 756-766 (DCMEVGGVPMC) are Extracellular-facing. A disulfide bond links cysteine 757 and cysteine 766. Residues 767–790 (LAVYMMVIIIGNLVMLNLFLALLL) form a helical membrane-spanning segment. Residues 791–1004 (SSFSSDNLSS…TIVEHDYFET (214 aa)) lie on the Cytoplasmic side of the membrane. Disordered regions lie at residues 844 to 864 (PPSDDVVGEEGDNEGKKDTLP) and 891 to 959 (VKGE…SKDP). Acidic residues predominate over residues 896-910 (EIEEEGLVDSSDEED). Polar residues predominate over residues 924-935 (SVCSTVDYSPSE). A compositionally biased stretch (acidic residues) spans 942–953 (EEEEEEEEEPEE). The III repeat unit spans residues 988 to 1295 (NLRRTCYTIV…KKYYNAMKKL (308 aa)). Residues 1005-1025 (FIIFMILLSSGVLAFEDIYIW) form a helical membrane-spanning segment. Residues 1026–1037 (RRRVIKVILEYA) lie on the Extracellular side of the membrane. The helical transmembrane segment at 1038–1058 (DKVFTYVFIVEMLLKWVAYGF) threads the bilayer. The Cytoplasmic segment spans residues 1059-1065 (KRYFTDA). A helical membrane pass occupies residues 1066–1086 (WCWLDFVIVGASIMGITSSLL). Residues 1087–1091 (GYEEL) are Extracellular-facing. The helical; Voltage-sensor transmembrane segment at 1092–1112 (GAIKNLRTIRALRPLRALSRF) threads the bilayer. The Cytoplasmic segment spans residues 1113–1131 (EGMKVVVRALLGAIPSIMN). The helical transmembrane segment at 1132-1152 (VLLVCLMFWLIFSIMGVNLFA) threads the bilayer. The Extracellular segment spans residues 1153–1199 (GKFYRCINTTTDEILPVEEVNNRSDCMALMYTNEVRWVNLKVNYDNA). N-linked (GlcNAc...) asparagine glycosylation is found at asparagine 1160 and asparagine 1174. The non-homologous region of repeat III stretch occupies residues 1172–1194 (VNNRSDCMALMYTNEVRWVNLKV). An intramembrane region (pore-forming) is located at residues 1200-1221 (GMGYLSLLQVSTFKGWMDIMYA). Topologically, residues 1222–1243 (AVDSREVEDQPIYEINVYMYLY) are extracellular. A helical membrane pass occupies residues 1244–1264 (FVIFIVFGAFFTLNLFIGVII). The Cytoplasmic segment spans residues 1265 to 1320 (DNFNRQKQKLGGEDLFMTEEQKKYYNAMKKLGSKKAAKCIPRPSNVVQGVVYDIVT). Residues 1304-1602 (IPRPSNVVQG…WHKFDVHGTQ (299 aa)) form an IV repeat. A helical membrane pass occupies residues 1321-1341 (QPFTDIFIMALICINMVAMMV). Residues 1342 to 1352 (ESEDQSQVKKD) are Extracellular-facing. A helical transmembrane segment spans residues 1353–1376 (ILSQINVIFVIIFTVECLLKLLAL). Residues 1377–1380 (RQYF) are Cytoplasmic-facing. A helical membrane pass occupies residues 1381-1398 (FTVGWNVFDFAVVVISII). Residues 1399–1416 (GLLLSDIIEKYFVSPTLF) lie on the Extracellular side of the membrane. A helical; Voltage-sensor membrane pass occupies residues 1417-1437 (RVIRLARIARVLRLIRAAKGI). Residues 1438 to 1453 (RTLLFALMMSLPALFN) lie on the Cytoplasmic side of the membrane. A helical transmembrane segment spans residues 1454-1474 (IGLLLFLIMFIFSIFGMSNFA). The Extracellular portion of the chain corresponds to 1475–1490 (YVKKQGGVDDIFNFET). Positions 1490–1505 (TFGNSMICLFEITTSA) are non-homologous region of repeat IV. The segment at residues 1491-1513 (FGNSMICLFEITTSAGWDGLLLP) is an intramembrane region (pore-forming). Topologically, residues 1514–1543 (TLNTGPPDCDPDVENPGTDVRGNCGNPGKG) are extracellular. The helical transmembrane segment at 1544–1567 (ITFFCSYIILSFLVVVNMYIAIIL) threads the bilayer. Over 1568 to 1820 (ENFGVAQEES…GAIVVRESIV (253 aa)) the chain is Cytoplasmic.

The protein belongs to the sodium channel (TC 1.A.1.10) family.

It localises to the cell membrane. In terms of biological role, mediates the voltage-dependent sodium ion permeability of excitable membranes. Assuming opened or closed conformations in response to the voltage difference across the membrane, the protein forms a sodium-selective channel through which Na(+) ions may pass in accordance with their electrochemical gradient. In Electrophorus electricus (Electric eel), this protein is Sodium channel protein.